The sequence spans 236 residues: Biosynthetic peptidoglycan transglycosylase (236 aa).

A helical transmembrane segment spans residues 12 to 31 (ALFWFAAGSIVLVLVFRWVP).

The protein belongs to the glycosyltransferase 51 family.

The protein localises to the cell inner membrane. The catalysed reaction is [GlcNAc-(1-&gt;4)-Mur2Ac(oyl-L-Ala-gamma-D-Glu-L-Lys-D-Ala-D-Ala)](n)-di-trans,octa-cis-undecaprenyl diphosphate + beta-D-GlcNAc-(1-&gt;4)-Mur2Ac(oyl-L-Ala-gamma-D-Glu-L-Lys-D-Ala-D-Ala)-di-trans,octa-cis-undecaprenyl diphosphate = [GlcNAc-(1-&gt;4)-Mur2Ac(oyl-L-Ala-gamma-D-Glu-L-Lys-D-Ala-D-Ala)](n+1)-di-trans,octa-cis-undecaprenyl diphosphate + di-trans,octa-cis-undecaprenyl diphosphate + H(+). It functions in the pathway cell wall biogenesis; peptidoglycan biosynthesis. Its function is as follows. Peptidoglycan polymerase that catalyzes glycan chain elongation from lipid-linked precursors. The chain is Biosynthetic peptidoglycan transglycosylase from Pseudomonas putida (strain W619).